Here is a 394-residue protein sequence, read N- to C-terminus: Envelope glycoprotein D (394 aa).

Residues 1 to 25 (MGGAAARLGAVILFVVIVGLHGVRG) form the signal peptide. The interaction with TNFRSF14 stretch occupies residues 26–57 (KYALADASLKMADPNRFRGKDLPVLDQLTDPP). Topologically, residues 26–340 (KYALADASLK…YHPPATPNNM (315 aa)) are virion surface. Histidine 64 contacts Zn(2+). Intrachain disulfides connect cysteine 91–cysteine 214, cysteine 131–cysteine 227, and cysteine 143–cysteine 152. N-linked (GlcNAc...) asparagine; by host glycans are attached at residues asparagine 119 and asparagine 146. Aspartate 240 is a binding site for Zn(2+). Positions 261–305 (LKIAGWHGPKAPYTSTLLPPELSETPNATQPELAPEDPEDSALLE) are profusion. Positions 275–301 (STLLPPELSETPNATQPELAPEDPEDS) are disordered. Residue asparagine 287 is glycosylated (N-linked (GlcNAc...) asparagine; by host). Residues 341-361 (GLIAGAVGGSLLAALVICGIV) form a helical membrane-spanning segment. Residues 362–394 (YWMHRRTRKAPKRIRLPHIREDDQPSSHQPLFY) are Intravirion-facing.

It belongs to the herpesviridae glycoprotein D family. As to quaternary structure, homodimer. Interacts with host receptor TNFRSF14. Interacts with host receptor NECTIN1. Mutant Rid1 interacts with host receptor NECTIN2. Interacts (via profusion domain) with gB; this interaction occurs in the absence of gH/gL. Interacts (via profusion domain) with gH/gL heterodimer; this interaction occurs in the absence of gB. Associates with the gB-gH/gL-gD complex. Interacts (via C-terminus) with UL11 tegument protein. Interacts (via C-terminus) with VP22 tegument protein; this interaction might be very weak. Interacts with host RSAD2.

It localises to the virion membrane. The protein localises to the host Golgi apparatus. In terms of biological role, envelope glycoprotein that binds to the host cell entry receptors NECTIN1, TNFRSF14/HVEM and 3-O-sulfated heparan sulfate, promoting the virus entry into host cells. May trigger fusion with host membrane, by recruiting the fusion machinery composed of gB and gH/gL. The chain is Envelope glycoprotein D (gD) from Human herpesvirus 1 (strain KOS) (HHV-1).